Reading from the N-terminus, the 264-residue chain is Tryptophan synthase alpha chain (264 aa).

Catalysis depends on proton acceptor residues Glu-45 and Asp-56.

Belongs to the TrpA family. In terms of assembly, tetramer of two alpha and two beta chains.

It catalyses the reaction (1S,2R)-1-C-(indol-3-yl)glycerol 3-phosphate + L-serine = D-glyceraldehyde 3-phosphate + L-tryptophan + H2O. Its pathway is amino-acid biosynthesis; L-tryptophan biosynthesis; L-tryptophan from chorismate: step 5/5. In terms of biological role, the alpha subunit is responsible for the aldol cleavage of indoleglycerol phosphate to indole and glyceraldehyde 3-phosphate. The chain is Tryptophan synthase alpha chain from Leptospira borgpetersenii serovar Hardjo-bovis (strain JB197).